A 100-amino-acid polypeptide reads, in one-letter code: Putative antiporter subunit mnhF2 (100 aa).

Transmembrane regions (helical) follow at residues 5 to 25 (FTQIFIISALVIFGMALLVCL), 38 to 60 (VVSFDASSAVVMSIVGVMSVIFN), and 65 to 87 (LDSIMLIAIISFVSSVSISRFIG).

The protein belongs to the CPA3 antiporters (TC 2.A.63) subunit F family. As to quaternary structure, may form a heterooligomeric complex that consists of seven subunits: mnhA2, mnhB2, mnhC2, mnhD2, mnhE2, mnhF2 and mnhG2.

The protein localises to the cell membrane. The chain is Putative antiporter subunit mnhF2 (mnhF2) from Staphylococcus epidermidis (strain ATCC 35984 / DSM 28319 / BCRC 17069 / CCUG 31568 / BM 3577 / RP62A).